A 101-amino-acid chain; its full sequence is Small ribosomal subunit protein uS14 (101 aa).

Positions 1–10 (MAKKSSIEKN) are enriched in basic and acidic residues. A disordered region spans residues 1–23 (MAKKSSIEKNNRRKKMTKNAAPK). Basic residues predominate over residues 11–23 (NRRKKMTKNAAPK).

It belongs to the universal ribosomal protein uS14 family. Part of the 30S ribosomal subunit. Contacts proteins S3 and S10.

In terms of biological role, binds 16S rRNA, required for the assembly of 30S particles and may also be responsible for determining the conformation of the 16S rRNA at the A site. The polypeptide is Small ribosomal subunit protein uS14 (Rhodopseudomonas palustris (strain HaA2)).